Consider the following 449-residue polypeptide: Chromosomal replication initiator protein DnaA (449 aa).

Residues 1 to 73 (MTQNPQWLWQ…TETIAELLQQ (73 aa)) form a domain I, interacts with DnaA modulators region. Residues 73–109 (QPVKVRLTSPEGNTLAATQSFYSSRSGQSTRPGKKTP) form a domain II region. Residues 90-103 (TQSFYSSRSGQSTR) are compositionally biased toward polar residues. Residues 90-110 (TQSFYSSRSGQSTRPGKKTPE) form a disordered region. The segment at 110 to 326 (ELNSKYTFSR…GALLRAVTHI (217 aa)) is domain III, AAA+ region. ATP contacts are provided by glycine 154, glycine 156, lysine 157, and threonine 158. The segment at 327–449 (AISGLPMTVE…DRINHHHQNL (123 aa)) is domain IV, binds dsDNA.

The protein belongs to the DnaA family. In terms of assembly, oligomerizes as a right-handed, spiral filament on DNA at oriC.

The protein localises to the cytoplasm. Its function is as follows. Plays an essential role in the initiation and regulation of chromosomal replication. ATP-DnaA binds to the origin of replication (oriC) to initiate formation of the DNA replication initiation complex once per cell cycle. Binds the DnaA box (a 9 base pair repeat at the origin) and separates the double-stranded (ds)DNA. Forms a right-handed helical filament on oriC DNA; dsDNA binds to the exterior of the filament while single-stranded (ss)DNA is stabiized in the filament's interior. The ATP-DnaA-oriC complex binds and stabilizes one strand of the AT-rich DNA unwinding element (DUE), permitting loading of DNA polymerase. After initiation quickly degrades to an ADP-DnaA complex that is not apt for DNA replication. Binds acidic phospholipids. The sequence is that of Chromosomal replication initiator protein DnaA from Picosynechococcus sp. (strain ATCC 27264 / PCC 7002 / PR-6) (Agmenellum quadruplicatum).